Reading from the N-terminus, the 360-residue chain is Cannabinoid receptor 2 (360 aa).

Residues Met-1–Gln-33 lie on the Extracellular side of the membrane. Residue Asn-11 is glycosylated (N-linked (GlcNAc...) asparagine). The helical transmembrane segment at Ile-34–Leu-59 threads the bilayer. The Cytoplasmic portion of the chain corresponds to Ser-60–Leu-71. A helical transmembrane segment spans residues Phe-72–Val-92. Over Ile-93–Asn-104 the chain is Extracellular. A helical transmembrane segment spans residues Ile-105 to Val-129. Residues Asp-130–Arg-149 are Cytoplasmic-facing. The helical transmembrane segment at Ala-150–Trp-172 threads the bilayer. Residues Thr-173–Asn-188 are Extracellular-facing. Residues Asp-189–Trp-214 traverse the membrane as a helical segment. Residues Lys-215–Thr-246 lie on the Cytoplasmic side of the membrane. The chain crosses the membrane as a helical span at residues Leu-247–His-267. Over Ser-268 to Glu-279 the chain is Extracellular. A helical transmembrane segment spans residues Ala-280 to Leu-301. Topologically, residues Arg-302–Cys-360 are cytoplasmic. The segment at Glu-327 to Cys-360 is disordered. A phosphoserine mark is found at Ser-335 and Ser-336. The residue at position 338 (Thr-338) is a Phosphothreonine. The span at Gly-349 to Cys-360 shows a compositional bias: polar residues. Ser-352 is subject to Phosphoserine.

This sequence belongs to the G-protein coupled receptor 1 family. In terms of processing, constitutively phosphorylated on Ser-352; phosphorylation increases cell internalization and desensitizes the receptor. As to expression, expressed in spleen and brain by neurons and glial cells (at protein level). Expressed in lung, testis and thymus but not in heart, liver or kidney. Expressed in cerebellum, cortex and brainstem.

The protein localises to the cell membrane. It localises to the cell projection. It is found in the dendrite. Its subcellular location is the perikaryon. Its function is as follows. Heterotrimeric G protein-coupled receptor for endocannabinoid 2-arachidonoylglycerol mediating inhibition of adenylate cyclase. May function in inflammatory response, nociceptive transmission and bone homeostasis. In Rattus norvegicus (Rat), this protein is Cannabinoid receptor 2 (Cnr2).